Here is a 390-residue protein sequence, read N- to C-terminus: Probable protein phosphatase 2C 30 (390 aa).

Residues 1–10 (MQLSKNPIKQ) show a composition bias toward polar residues. 2 disordered regions span residues 1-20 (MQLS…NYTD) and 40-85 (PPLV…DSET). Residues 44–61 (FSPTSVKTPLSSPRSSPP) are compositionally biased toward low complexity. Positions 128 to 385 (YYSVYCKRGR…DDISLIIIQL (258 aa)) constitute a PPM-type phosphatase domain. Mn(2+) is bound by residues Asp166, Gly167, Asp331, and Asp376.

This sequence belongs to the PP2C family. It depends on Mg(2+) as a cofactor. Requires Mn(2+) as cofactor.

It catalyses the reaction O-phospho-L-seryl-[protein] + H2O = L-seryl-[protein] + phosphate. It carries out the reaction O-phospho-L-threonyl-[protein] + H2O = L-threonyl-[protein] + phosphate. The polypeptide is Probable protein phosphatase 2C 30 (PP2C5) (Arabidopsis thaliana (Mouse-ear cress)).